The sequence spans 30 residues: Thaumatin-like protein (30 aa).

It belongs to the thaumatin family.

It localises to the secreted. Functionally, has antifungal activity against C.comatus, F.oxysporum and P.ostreatus. The chain is Thaumatin-like protein from Phaseolus vulgaris (Kidney bean).